The following is a 381-amino-acid chain: Cytosolic acyl coenzyme A thioester hydrolase (381 aa).

The HotDog ACOT-type 1 domain maps to 51-169 (PGHCIAMGRI…TLWYVPLSLK (119 aa)). Asn67 is a catalytic residue. Lys169 and Lys199 each carry N6-acetyllysine. One can recognise a HotDog ACOT-type 2 domain in the interval 225–339 (SYSQSSLIHL…FFTYVSLNQE (115 aa)). Asp256 is a catalytic residue. An N6-acetyllysine modification is found at Lys284. The tract at residues 343–381 (LPVPQLVPETEDEKKRFEEGKGRYLQMKAKRQGHTEPQP) is disordered. Positions 354-364 (DEKKRFEEGKG) are enriched in basic and acidic residues.

As to quaternary structure, homohexamer. Post-translationally, the N-terminus is blocked. Isoform 1 is expressed constitutively in brain and testis. Isoform 2 is induced in liver by treatment with the peroxisome proliferator.

It is found in the cytoplasm. The protein resides in the cytosol. It catalyses the reaction hexadecanoyl-CoA + H2O = hexadecanoate + CoA + H(+). The catalysed reaction is dodecanoyl-CoA + H2O = dodecanoate + CoA + H(+). The enzyme catalyses tetradecanoyl-CoA + H2O = tetradecanoate + CoA + H(+). It carries out the reaction decanoyl-CoA + H2O = decanoate + CoA + H(+). It catalyses the reaction octanoyl-CoA + H2O = octanoate + CoA + H(+). The catalysed reaction is octadecanoyl-CoA + H2O = octadecanoate + CoA + H(+). The enzyme catalyses (9Z)-octadecenoyl-CoA + H2O = (9Z)-octadecenoate + CoA + H(+). It functions in the pathway lipid metabolism; fatty acid metabolism. Functionally, catalyzes the hydrolysis of acyl-CoAs into free fatty acids and coenzyme A (CoASH), regulating their respective intracellular levels. Preferentially hydrolyzes palmitoyl-CoA, but has a broad specificity acting on other fatty acyl-CoAs with chain-lengths of C8-C18. May play an important physiological function in brain. This chain is Cytosolic acyl coenzyme A thioester hydrolase (Acot7), found in Rattus norvegicus (Rat).